The primary structure comprises 208 residues: Proheparin-binding EGF-like growth factor (208 aa).

A signal peptide spans Met-1–Ala-19. Positions Leu-20 to Arg-62 are excised as a propeptide. At Leu-20 to Thr-160 the chain is on the extracellular side. A disordered region spans residues Ala-34–Gly-55. Residues Gly-36–Gln-49 show a composition bias toward polar residues. O-linked (GalNAc...) threonine glycans are attached at residues Thr-75 and Thr-85. The disordered stretch occupies residues Gln-81–Lys-104. Over residues Lys-93–Gly-102 the composition is skewed to basic residues. The EGF-like domain maps to Lys-104 to His-144. 3 disulfide bridges follow: Cys-108-Cys-121, Cys-116-Cys-132, and Cys-134-Cys-143. The segment at Pro-136–Leu-148 is toxin-binding domain. A propeptide spans Pro-149–His-208 (C-terminal). A helical transmembrane segment spans residues Thr-161 to Phe-184. The Cytoplasmic portion of the chain corresponds to Arg-185–His-208.

Interacts with EGFR and ERBB4. Interacts with FBLN1. O-glycosylated.

It localises to the secreted. The protein resides in the extracellular space. The protein localises to the cell membrane. In terms of biological role, growth factor that mediates its effects via EGFR, ERBB2 and ERBB4. Required for normal cardiac valve formation and normal heart function. Promotes smooth muscle cell proliferation. May be involved in macrophage-mediated cellular proliferation. It is mitogenic for fibroblasts, but not endothelial cells. It is able to bind EGF receptor/EGFR with higher affinity than EGF itself and is a far more potent mitogen for smooth muscle cells than EGF. Also acts as a diphtheria toxin receptor. In Chlorocebus aethiops (Green monkey), this protein is Proheparin-binding EGF-like growth factor (HBEGF).